The following is a 296-amino-acid chain: MEDYIVRATAKEGTIRALAAITTNMVKEAQKVHGLSPLATVALGRTMTAAAMMSTTLKEENAVITLQIKGDGPIGGIVVVVDSSANVKGYVHNPLVYLPLNSQGKYDVAGAVGNGYLNVIKDLGLREPYVGHVDLVSGEIAEDITYYYAYSEQVPTATALGVLTNATEIVVSAGGFILQLMPGADDDTISFIENKISSIPPVSTLLAQNKSPEDILEMLLSEKDMKIIGKSPCRYLCNCSRERMERNIMTLGKEEIMGMINENHGAEAHCHFCNKKYWFSEEDLLRLVKIIESQKS.

2 disulfides stabilise this stretch: C237–C239 and C270–C273.

Belongs to the HSP33 family. In terms of processing, under oxidizing conditions two disulfide bonds are formed involving the reactive cysteines. Under reducing conditions zinc is bound to the reactive cysteines and the protein is inactive.

Its subcellular location is the cytoplasm. Its function is as follows. Redox regulated molecular chaperone. Protects both thermally unfolding and oxidatively damaged proteins from irreversible aggregation. Plays an important role in the bacterial defense system toward oxidative stress. The polypeptide is 33 kDa chaperonin (Acetivibrio thermocellus (strain ATCC 27405 / DSM 1237 / JCM 9322 / NBRC 103400 / NCIMB 10682 / NRRL B-4536 / VPI 7372) (Clostridium thermocellum)).